Reading from the N-terminus, the 431-residue chain is tRNA(Ile)-lysidine synthase (431 aa).

ATP is bound at residue 26 to 31 (SGGVDS).

Belongs to the tRNA(Ile)-lysidine synthase family.

It is found in the cytoplasm. It carries out the reaction cytidine(34) in tRNA(Ile2) + L-lysine + ATP = lysidine(34) in tRNA(Ile2) + AMP + diphosphate + H(+). Its function is as follows. Ligates lysine onto the cytidine present at position 34 of the AUA codon-specific tRNA(Ile) that contains the anticodon CAU, in an ATP-dependent manner. Cytidine is converted to lysidine, thus changing the amino acid specificity of the tRNA from methionine to isoleucine. This chain is tRNA(Ile)-lysidine synthase, found in Wolbachia pipientis wMel.